Reading from the N-terminus, the 100-residue chain is Transcription elongation factor A protein-like 7 (100 aa).

Basic and acidic residues predominate over residues 1 to 32; that stretch reads MQKPCKENEGKPKCSVPKREEKRPYGEFERQQ. Positions 1–34 are disordered; sequence MQKPCKENEGKPKCSVPKREEKRPYGEFERQQTE. A coiled-coil region spans residues 60–88; the sequence is EEMTREGDEMERCLEEIRGLRKKFRALHS.

It belongs to the TFS-II family. TFA subfamily. As to expression, highly expressed in normal and fetal brain tissues, and weakly expressed in uterus and ovary. Down-regulated in epithelial ovarian, cervical, prostate, breast, brain and lung cancer cell lines and in brain and ovarian tumors.

The protein resides in the nucleus. In terms of biological role, plays a role in the negative regulation of NF-kappa-B signaling at the basal level by modulating transcriptional activity of NF-kappa-B on its target gene promoters. Associates with cyclin D1 promoter containing Myc E-box sequence and transcriptionally represses cyclin D1 expression. Regulates telomerase reverse transcriptase expression and telomerase activity in both ALT (alternative lengthening of telomeres)and telomerase-positive cell lines. This is Transcription elongation factor A protein-like 7 (TCEAL7) from Homo sapiens (Human).